The sequence spans 288 residues: DegV domain-containing protein (288 aa).

The DegV domain occupies 3–282 (IAVMTDSTSY…SGGLGLGYVG (280 aa)). Hexadecanoate contacts are provided by Thr62 and Ser95.

Its function is as follows. May bind long-chain fatty acids, such as palmitate, and may play a role in lipid transport or fatty acid metabolism. The sequence is that of DegV domain-containing protein from Staphylococcus aureus.